We begin with the raw amino-acid sequence, 479 residues long: Protein ORD (479 aa).

The segment at Lys-102–Ser-140 is disordered. Residues Glu-104–Glu-116 are compositionally biased toward acidic residues. Basic and acidic residues predominate over residues Ala-124–Ser-140.

In terms of assembly, interacts with Sce.

The protein localises to the nucleus. The protein resides in the chromosome. It localises to the centromere. In terms of biological role, essential for proper maintenance of sister-chromatid cohesion in both male and female meiosis. Mutations in ord cause premature separation of the sister chromatids in meiosis I and random segregation in both meiotic divisions. Required for chiasma maintenance in female meiosis. Mutations in ord reduce recombination in female meiosis. The sequence is that of Protein ORD (ord) from Drosophila melanogaster (Fruit fly).